Reading from the N-terminus, the 93-residue chain is UPF0390 protein C24B10.18 (93 aa).

Residues 1–32 (MAQGEFKKKKNSSANKGGRVTKHSKNPKKGAR) form a disordered region. Positions 19 to 31 (RVTKHSKNPKKGA) are enriched in basic residues.

Belongs to the UPF0390 family.

The sequence is that of UPF0390 protein C24B10.18 from Schizosaccharomyces pombe (strain 972 / ATCC 24843) (Fission yeast).